The following is a 1588-amino-acid chain: Pentafunctional AROM polypeptide (1588 aa).

A 3-dehydroquinate synthase region spans residues 1-392 (MVQLAKVPIL…YGDSAQFVSD (392 aa)). NAD(+) contacts are provided by residues 43–45 (DTN), 78–81 (ETSK), 109–111 (GGV), and aspartate 114. Residue arginine 125 participates in 7-phospho-2-dehydro-3-deoxy-D-arabino-heptonate binding. 134-135 (TS) lines the NAD(+) pocket. 7-phospho-2-dehydro-3-deoxy-D-arabino-heptonate-binding residues include aspartate 141 and lysine 147. Lysine 156 serves as a coordination point for NAD(+). Asparagine 157 is a 7-phospho-2-dehydro-3-deoxy-D-arabino-heptonate binding site. Residues 174-177 (WLET) and asparagine 185 contribute to the NAD(+) site. Glutamate 189 contributes to the Zn(2+) binding site. 7-phospho-2-dehydro-3-deoxy-D-arabino-heptonate-binding positions include 189 to 192 (EVIK) and lysine 258. Glutamate 268 serves as the catalytic Proton acceptor; for 3-dehydroquinate synthase activity. Residues 272–276 (RNLLN) and histidine 279 contribute to the 7-phospho-2-dehydro-3-deoxy-D-arabino-heptonate site. A Zn(2+)-binding site is contributed by histidine 279. The active-site Proton acceptor; for 3-dehydroquinate synthase activity is histidine 283. Residues histidine 295 and lysine 364 each coordinate 7-phospho-2-dehydro-3-deoxy-D-arabino-heptonate. Histidine 295 lines the Zn(2+) pocket. The segment at 405-871 (VYPFKDIPAD…WDVLHSELGA (467 aa)) is EPSP synthase. The active-site For EPSP synthase activity is the cysteine 853. The shikimate kinase stretch occupies residues 890–1080 (SVVIIGMRAA…IPSGRSAFVC (191 aa)). 895–902 (GMRAAGKT) is an ATP binding site. Residues 1081-1293 (LTFDDLTEQT…AAPGQLTVAQ (213 aa)) form a 3-dehydroquinase region. Histidine 1198 functions as the Proton acceptor; for 3-dehydroquinate dehydratase activity in the catalytic mechanism. Catalysis depends on lysine 1227, which acts as the Schiff-base intermediate with substrate; for 3-dehydroquinate dehydratase activity. The shikimate dehydrogenase stretch occupies residues 1306 to 1588 (PKELFVVGKP…KAIFDAVTKE (283 aa)).

It in the N-terminal section; belongs to the sugar phosphate cyclases superfamily. Dehydroquinate synthase family. This sequence in the 2nd section; belongs to the EPSP synthase family. The protein in the 3rd section; belongs to the shikimate kinase family. In the 4th section; belongs to the type-I 3-dehydroquinase family. It in the C-terminal section; belongs to the shikimate dehydrogenase family. Homodimer. Zn(2+) is required as a cofactor.

The protein localises to the cytoplasm. The enzyme catalyses 7-phospho-2-dehydro-3-deoxy-D-arabino-heptonate = 3-dehydroquinate + phosphate. It carries out the reaction 3-dehydroquinate = 3-dehydroshikimate + H2O. The catalysed reaction is shikimate + NADP(+) = 3-dehydroshikimate + NADPH + H(+). It catalyses the reaction shikimate + ATP = 3-phosphoshikimate + ADP + H(+). The enzyme catalyses 3-phosphoshikimate + phosphoenolpyruvate = 5-O-(1-carboxyvinyl)-3-phosphoshikimate + phosphate. The protein operates within metabolic intermediate biosynthesis; chorismate biosynthesis; chorismate from D-erythrose 4-phosphate and phosphoenolpyruvate: step 2/7. It participates in metabolic intermediate biosynthesis; chorismate biosynthesis; chorismate from D-erythrose 4-phosphate and phosphoenolpyruvate: step 3/7. It functions in the pathway metabolic intermediate biosynthesis; chorismate biosynthesis; chorismate from D-erythrose 4-phosphate and phosphoenolpyruvate: step 4/7. Its pathway is metabolic intermediate biosynthesis; chorismate biosynthesis; chorismate from D-erythrose 4-phosphate and phosphoenolpyruvate: step 5/7. The protein operates within metabolic intermediate biosynthesis; chorismate biosynthesis; chorismate from D-erythrose 4-phosphate and phosphoenolpyruvate: step 6/7. Functionally, the AROM polypeptide catalyzes 5 consecutive enzymatic reactions in prechorismate polyaromatic amino acid biosynthesis. The sequence is that of Pentafunctional AROM polypeptide from Saccharomyces cerevisiae (strain Lalvin EC1118 / Prise de mousse) (Baker's yeast).